A 212-amino-acid chain; its full sequence is Methylthioribulose-1-phosphate dehydratase (212 aa).

Positions 99 and 101 each coordinate Zn(2+).

It belongs to the aldolase class II family. MtnB subfamily. As to quaternary structure, homotetramer. Zn(2+) is required as a cofactor.

The enzyme catalyses 5-(methylsulfanyl)-D-ribulose 1-phosphate = 5-methylsulfanyl-2,3-dioxopentyl phosphate + H2O. Its pathway is amino-acid biosynthesis; L-methionine biosynthesis via salvage pathway; L-methionine from S-methyl-5-thio-alpha-D-ribose 1-phosphate: step 2/6. Catalyzes the dehydration of methylthioribulose-1-phosphate (MTRu-1-P) into 2,3-diketo-5-methylthiopentyl-1-phosphate (DK-MTP-1-P). This Bacillus pumilus (strain SAFR-032) protein is Methylthioribulose-1-phosphate dehydratase.